Consider the following 121-residue polypeptide: Large ribosomal subunit protein bL20 (121 aa).

It belongs to the bacterial ribosomal protein bL20 family.

In terms of biological role, binds directly to 23S ribosomal RNA and is necessary for the in vitro assembly process of the 50S ribosomal subunit. It is not involved in the protein synthesizing functions of that subunit. This is Large ribosomal subunit protein bL20 from Orientia tsutsugamushi (strain Boryong) (Rickettsia tsutsugamushi).